We begin with the raw amino-acid sequence, 413 residues long: Metacaspase-1A (413 aa).

The interval Met-1 to Gly-104 is disordered. A compositionally biased stretch (pro residues) spans Ser-36 to His-47. Low complexity predominate over residues Gly-49–Gly-58. Over residues Gly-75 to His-85 the composition is skewed to polar residues. Active-site residues include His-204 and Cys-260.

This sequence belongs to the peptidase C14B family.

Its function is as follows. Involved in cell death (apoptosis). Required for the apoptotic-like loss of membrane phospholipid asymmetry at stationary phase and facilitates growth under conditions of endoplasmic reticulum stress. The polypeptide is Metacaspase-1A (casA) (Aspergillus fumigatus (strain CBS 144.89 / FGSC A1163 / CEA10) (Neosartorya fumigata)).